We begin with the raw amino-acid sequence, 279 residues long: Undecaprenyl-diphosphatase (279 aa).

A run of 8 helical transmembrane segments spans residues 1–21 (MVLEAVLLGIVQGITEFLPIS), 39–59 (GRFFLSSVQLGTSFALILYFF), 96–116 (LLLVTGTIPVVLLGFLLVRFV), 128–148 (FTMGVALIVFGLLLGFADALF), 155–175 (IFQITFIESVLIGAAQVFAII), 201–221 (FSFLLSLPVTFIGGMYGLVAG), 231–251 (YSLIGAIVSFVVGLLVVSALL), and 259–279 (FVLFVYYRVLFGLFLVIVSFF).

The protein belongs to the UppP family.

The protein resides in the cell membrane. It carries out the reaction di-trans,octa-cis-undecaprenyl diphosphate + H2O = di-trans,octa-cis-undecaprenyl phosphate + phosphate + H(+). Its function is as follows. Catalyzes the dephosphorylation of undecaprenyl diphosphate (UPP). Confers resistance to bacitracin. In Tropheryma whipplei (strain Twist) (Whipple's bacillus), this protein is Undecaprenyl-diphosphatase.